A 107-amino-acid polypeptide reads, in one-letter code: Nucleoid-associated protein PHZ_c0369 (107 aa).

The protein belongs to the YbaB/EbfC family. As to quaternary structure, homodimer.

The protein resides in the cytoplasm. It is found in the nucleoid. Its function is as follows. Binds to DNA and alters its conformation. May be involved in regulation of gene expression, nucleoid organization and DNA protection. In Phenylobacterium zucineum (strain HLK1), this protein is Nucleoid-associated protein PHZ_c0369.